The primary structure comprises 63 residues: Large ribosomal subunit protein bL28 (63 aa).

The protein belongs to the bacterial ribosomal protein bL28 family.

This chain is Large ribosomal subunit protein bL28, found in Clostridium acetobutylicum (strain ATCC 824 / DSM 792 / JCM 1419 / IAM 19013 / LMG 5710 / NBRC 13948 / NRRL B-527 / VKM B-1787 / 2291 / W).